We begin with the raw amino-acid sequence, 166 residues long: Endoribonuclease YbeY (166 aa).

Residues histidine 136, histidine 140, and histidine 146 each contribute to the Zn(2+) site.

Belongs to the endoribonuclease YbeY family. Zn(2+) serves as cofactor.

It localises to the cytoplasm. Its function is as follows. Single strand-specific metallo-endoribonuclease involved in late-stage 70S ribosome quality control and in maturation of the 3' terminus of the 16S rRNA. In Synechococcus sp. (strain CC9605), this protein is Endoribonuclease YbeY.